The following is a 152-amino-acid chain: MAINVEPALSPHLVVDDAASAIDFYVKAFDAVELGRVPGPDGKLIHAALRINGFTVMLNDDVPQMCGGKSMTPTSLGGTPVTIHLTVTDVDAKFQRALNAGATVVTALEDQLWGDRYGVVADPFGHHWSLGQPVREVNMDEIQAAMSSQGDG.

The VOC domain occupies 7–133 (PALSPHLVVD…FGHHWSLGQP (127 aa)).

This is an uncharacterized protein from Mycobacterium bovis (strain ATCC BAA-935 / AF2122/97).